A 389-amino-acid polypeptide reads, in one-letter code: Phospho-N-acetylmuramoyl-pentapeptide-transferase (389 aa).

A run of 10 helical transmembrane segments spans residues 21–41 (FITFRAVFATLTALAIGLFFG), 70–90 (GTPTMGGALILLAIGVATLLW), 97–117 (FVWVVLIVTLGFGAVGWVDDY), 134–154 (YMWQSIIGLFAAVYLAFSVSA), 189–209 (TISYPLGVWGFIALTYFVIVG), 222–242 (GLAIMPTVMVGTALGLFAYLT), 259–279 (AGELIIFCGAMAGAGLAFLWF), 286–306 (VFMGDVGALALGGALGTIAVI), 311–331 (IVLFIMGGVFVVETLSVMIQV), and 366–386 (QVVVRFWIITMMLVLFGLSTL).

The protein belongs to the glycosyltransferase 4 family. MraY subfamily. Mg(2+) serves as cofactor.

It is found in the cell inner membrane. The enzyme catalyses UDP-N-acetyl-alpha-D-muramoyl-L-alanyl-gamma-D-glutamyl-meso-2,6-diaminopimeloyl-D-alanyl-D-alanine + di-trans,octa-cis-undecaprenyl phosphate = di-trans,octa-cis-undecaprenyl diphospho-N-acetyl-alpha-D-muramoyl-L-alanyl-D-glutamyl-meso-2,6-diaminopimeloyl-D-alanyl-D-alanine + UMP. It functions in the pathway cell wall biogenesis; peptidoglycan biosynthesis. Functionally, catalyzes the initial step of the lipid cycle reactions in the biosynthesis of the cell wall peptidoglycan: transfers peptidoglycan precursor phospho-MurNAc-pentapeptide from UDP-MurNAc-pentapeptide onto the lipid carrier undecaprenyl phosphate, yielding undecaprenyl-pyrophosphoryl-MurNAc-pentapeptide, known as lipid I. The protein is Phospho-N-acetylmuramoyl-pentapeptide-transferase of Herminiimonas arsenicoxydans.